A 350-amino-acid polypeptide reads, in one-letter code: Probable sugar phosphate/phosphate translocator At4g32390 (350 aa).

A run of 10 helical transmembrane segments spans residues 15-35 (ILLSYTYVAIWIFLSFTVIVY), 49-69 (FPITLTMIHMAFCSSLAVILI), 89-109 (VVPIGALYSLSLWLSNSAYIY), 112-132 (VSFIQMLKALMPVAVYSIGVL), 146-166 (MLSISFGVAIAAYGEAKFDTW), 168-188 (VMLQLGAVAFEATRLVLIQIL), 205-225 (VAPCCLVFLFFPWIFVELPIL), 235-255 (FVIFGTNSVCAFALNLAVFLL), 263-283 (TMNVAGVVKDWLLIAFSWSVI), and 286-306 (TVTPLNLFGYGLAFLGVAYYN). The EamA domain occupies 38-155 (YILDKKMYNW…MLSISFGVAI (118 aa)). Residues 324 to 350 (QGDEEEAGKLLEERESEAAAKRNETED) are disordered.

This sequence belongs to the TPT transporter family. TPT (TC 2.A.7.9) subfamily.

The protein resides in the membrane. This is Probable sugar phosphate/phosphate translocator At4g32390 from Arabidopsis thaliana (Mouse-ear cress).